Reading from the N-terminus, the 307-residue chain is Protein rep (307 aa).

Y219 contributes to the DNA binding site.

Belongs to the Gram-positive plasmids replication protein type 1 family.

The polypeptide is Protein rep (repA) (Bacillus sp).